The sequence spans 400 residues: Outer membrane protein alpha (400 aa).

The signal sequence occupies residues 1-20 (MKRVLLTVAMLSVFFSAMFA). The SLH domain maps to 21 to 81 (FFPDVPKDHW…DFIEQKMLAG (61 aa)). Residues 85-379 (DLAQVVGNLS…ESVKAYNRNL (295 aa)) are a coiled coil. 3 tandem repeats follow at residues 208 to 232 (VNLH…LNNK), 251 to 275 (VELH…LNKK), and 326 to 350 (VDLH…LNMK). A 3 X 25 AA approximate repeat region spans residues 208–350 (VNLHEKDIIN…SSLEEDLNMK (143 aa)). Residues 380–400 (SILTGAFFGILGLILIAISGK) form a helical membrane-spanning segment.

In terms of assembly, homotetramer.

It localises to the cell outer membrane. Its function is as follows. Links the outer membrane to the inner membrane. Long fibrous protein that could serve to separate the two membranes. The chain is Outer membrane protein alpha (omp-alpha) from Thermotoga maritima (strain ATCC 43589 / DSM 3109 / JCM 10099 / NBRC 100826 / MSB8).